We begin with the raw amino-acid sequence, 253 residues long: H repeat-associated putative transposase YbfD (253 aa).

Belongs to the transposase 11 family.

This Escherichia coli (strain K12) protein is H repeat-associated putative transposase YbfD (ybfD).